The primary structure comprises 136 residues: Pterin-4-alpha-carbinolamine dehydratase 2 (136 aa).

An N6-acetyllysine; alternate mark is found at Lys120, Lys124, and Lys131. An N6-succinyllysine; alternate mark is found at Lys120, Lys124, and Lys131.

This sequence belongs to the pterin-4-alpha-carbinolamine dehydratase family. As to quaternary structure, homotetramer. Interacts with DYRK1B.

The catalysed reaction is (4aS,6R)-4a-hydroxy-L-erythro-5,6,7,8-tetrahydrobiopterin = (6R)-L-erythro-6,7-dihydrobiopterin + H2O. Its function is as follows. Involved in tetrahydrobiopterin biosynthesis. Seems to both prevent the formation of 7-pterins and accelerate the formation of quinonoid-BH2. Functionally, regulates the dimerization of homeodomain protein HNF-1-alpha and enhances its transcriptional activity. The polypeptide is Pterin-4-alpha-carbinolamine dehydratase 2 (Pcbd2) (Mus musculus (Mouse)).